The chain runs to 198 residues: Tumor necrosis factor receptor superfamily member 22 (198 aa).

Topologically, residues 1–20 (MFGFFCSLVSSLSRWFLWRR) are cytoplasmic. Residues 21 to 41 (LLLLLLLLLLNLPLQVKFAML) traverse the membrane as a helical; Signal-anchor for type II membrane protein segment. The Extracellular portion of the chain corresponds to 42–198 (ELHSFKCPAG…SVVVFRIIRR (157 aa)). 3 TNFR-Cys repeats span residues 47 to 82 (KCPA…QGQC), 84 to 124 (KCHP…DRKC), and 125 to 165 (QCRT…NTVC). 9 disulfides stabilise this stretch: cysteine 48–cysteine 59, cysteine 60–cysteine 73, cysteine 63–cysteine 82, cysteine 85–cysteine 100, cysteine 103–cysteine 116, cysteine 106–cysteine 124, cysteine 126–cysteine 141, cysteine 144–cysteine 157, and cysteine 147–cysteine 165. N-linked (GlcNAc...) asparagine glycosylation occurs at asparagine 62. N-linked (GlcNAc...) asparagine glycosylation is present at asparagine 158.

As to expression, ubiquitous.

It localises to the cell membrane. The protein resides in the secreted. Receptor for the cytotoxic ligand TNFSF10/TRAIL. Lacks a cytoplasmic death domain and hence is not capable of inducing apoptosis. Protects cells against TRAIL mediated apoptosis possibly through ligand competition. Cannot induce the NF-kappa-B pathway. This is Tumor necrosis factor receptor superfamily member 22 (Tnfrsf22) from Mus musculus (Mouse).